We begin with the raw amino-acid sequence, 109 residues long: Mitochondrial import receptor subunit TOM22 homolog (109 aa).

The Cytoplasmic segment spans residues 1 to 60 (MALVRDDFDDIPDSEIHETIVERIEGLGEMFPDALRSAVHSTVDWSIWGVKGVFSLTKST). A helical membrane pass occupies residues 61-77 (IWVVSTTSLIAFLPYII). Residues 78-109 (EKERSDLEKTQVAQQRQMLLGPSAAIQQAKTA) are Mitochondrial intermembrane-facing.

It belongs to the Tom22 family. As to quaternary structure, forms part of the preprotein translocase complex of the outer mitochondrial membrane (TOM complex).

Its subcellular location is the mitochondrion outer membrane. In terms of biological role, central receptor component of the translocase of the outer membrane of mitochondria (TOM complex) responsible for the recognition and translocation of cytosolically synthesized mitochondrial preproteins. Together with the peripheral receptor tomm-20 functions as the transit peptide receptor and facilitates the movement of preproteins into the translocation pore. This chain is Mitochondrial import receptor subunit TOM22 homolog, found in Caenorhabditis elegans.